We begin with the raw amino-acid sequence, 285 residues long: Diphthine methyl ester synthase (285 aa).

Residues leucine 9, aspartate 84, glycine 87, 112-113 (SI), leucine 163, valine 221, and histidine 246 each bind S-adenosyl-L-methionine.

It belongs to the diphthine synthase family.

The protein localises to the cytoplasm. The catalysed reaction is 2-[(3S)-amino-3-carboxypropyl]-L-histidyl-[translation elongation factor 2] + 4 S-adenosyl-L-methionine = diphthine methyl ester-[translation elongation factor 2] + 4 S-adenosyl-L-homocysteine + 3 H(+). The protein operates within protein modification; peptidyl-diphthamide biosynthesis. Its function is as follows. S-adenosyl-L-methionine-dependent methyltransferase that catalyzes four methylations of the modified target histidine residue in translation elongation factor 2 (EF-2), to form an intermediate called diphthine methyl ester. The four successive methylation reactions represent the second step of diphthamide biosynthesis. This Aspergillus fumigatus (strain ATCC MYA-4609 / CBS 101355 / FGSC A1100 / Af293) (Neosartorya fumigata) protein is Diphthine methyl ester synthase (dph5).